We begin with the raw amino-acid sequence, 1090 residues long: Aminopeptidase-like protein AC3.5 (1090 aa).

The Cytoplasmic segment spans residues 1-77; sequence MEDVDLGKDR…KPKKRIACSP (77 aa). Positions 21-33 are enriched in low complexity; sequence GNGSASNLNNRNN. Residues 21 to 71 are disordered; sequence GNGSASNLNNRNNIPLSEKAAKEPLQTQPQEAPPAPKPKVQKQKPPVKPKK. Basic residues predominate over residues 59 to 71; that stretch reads KVQKQKPPVKPKK. A helical; Signal-anchor for type II membrane protein membrane pass occupies residues 78 to 98; that stretch reads GSAICLFLLAVAAIIFAAFLG. The Lumenal portion of the chain corresponds to 99–1090; it reads HYLTKQNYEM…DEMESSEEQE (992 aa). N-linked (GlcNAc...) asparagine glycans are attached at residues asparagine 115, asparagine 123, asparagine 143, asparagine 176, and asparagine 230. The disordered stretch occupies residues 217-259; sequence VTKRAKKSVDSGTNSTSEMPEGSGEEAMATTATTTTTESTTPV. The segment covering 241-257 has biased composition (low complexity); it reads EEAMATTATTTTTESTT. N-linked (GlcNAc...) asparagine glycans are attached at residues asparagine 402, asparagine 710, asparagine 723, asparagine 789, asparagine 894, asparagine 919, asparagine 964, and asparagine 993. Residues 1069–1080 are compositionally biased toward basic and acidic residues; sequence YLDGKMKGPAKD. The segment at 1069-1090 is disordered; that stretch reads YLDGKMKGPAKDDEMESSEEQE. A compositionally biased stretch (acidic residues) spans 1081 to 1090; that stretch reads DEMESSEEQE.

It belongs to the peptidase M1 family.

The protein resides in the membrane. The sequence is that of Aminopeptidase-like protein AC3.5 from Caenorhabditis elegans.